The chain runs to 516 residues: Adenosine deaminase (516 aa).

The signal sequence occupies residues Met-1–Asp-20.

The protein belongs to the metallo-dependent hydrolases superfamily. Adenosine and AMP deaminases family. ADGF subfamily. Zn(2+) is required as a cofactor. As to expression, salivary gland (at protein level).

It localises to the secreted. The catalysed reaction is adenosine + H2O + H(+) = inosine + NH4(+). Catalyzes the deamination of adenosine to inosine. The protein is Adenosine deaminase of Phlebotomus duboscqi (Sandfly).